We begin with the raw amino-acid sequence, 491 residues long: CRM-domain containing factor CFM9, mitochondrial (491 aa).

The N-terminal 25 residues, 1–25, are a transit peptide targeting the mitochondrion; the sequence is MNQVFKGWSRGMSTSRGRSMRSKVE. The disordered stretch occupies residues 1-34; sequence MNQVFKGWSRGMSTSRGRSMRSKVESRMRKESGK. Positions 22–34 are enriched in basic and acidic residues; it reads SKVESRMRKESGK. The 98-residue stretch at 90–187 folds into the CRM domain; that stretch reads ELFTSEQVQA…RNYRQPKNLI (98 aa). Residues 255–265 are compositionally biased toward basic and acidic residues; sequence PYVFHGDKQSE. Disordered regions lie at residues 255 to 287 and 328 to 491; these read PYVF…DQEE and RSRT…WDSD. Acidic residues predominate over residues 277 to 287; it reads EPGDEDSDQEE. Positions 345 to 359 are enriched in basic and acidic residues; sequence RRNDRDTHSQRRPND. Positions 360 to 375 are enriched in acidic residues; the sequence is SDDDDDDGELDSEDDE. Residues 392–416 show a composition bias toward basic and acidic residues; sequence RPREDFKRRSPDPRPRPRAQVRSDD. The span at 453 to 478 shows a compositional bias: polar residues; sequence TVSASSSKQSRFRNNSSRDGINNSKS.

As to expression, highly expressed in roots and meristemic regions of young seedlings. Expressed at low levels in stems, trichomes and stigma.

Its subcellular location is the mitochondrion. In terms of biological role, involved in the splicing of group II introns in mitochondria. Required for the splicing of mitochondrial introns found in nad1, nad2, nad4, nad5, nad7, rps3 and cox2 genes. Splicing of mitochondrial introns is crucial for mitochondrial biogenesis and function, plant growth and development, and plant response to abiotic stresses. This Arabidopsis thaliana (Mouse-ear cress) protein is CRM-domain containing factor CFM9, mitochondrial.